A 287-amino-acid polypeptide reads, in one-letter code: Thioredoxin-related transmembrane protein 2 (287 aa).

An N-terminal signal peptide occupies residues 1 to 35 (MAVLAPLLAFLYAVPGLLRWVSQPYYLLSALLSVS). Over 36–112 (FLLVRKVPPV…ILFFRLDLRM (77 aa)) the chain is Extracellular. A helical membrane pass occupies residues 113 to 133 (GLLYITLCIVFLMTCKPPLYL). Topologically, residues 134-287 (GPEHIKYFSD…NEYNDSKKDQ (154 aa)) are cytoplasmic. Positions 135–269 (PEHIKYFSDK…LYQKAKKIRK (135 aa)) constitute a Thioredoxin domain. The Di-lysine motif signature appears at 284–287 (KKDQ).

In terms of assembly, monomer. Homodimer; disulfide-linked. Occurs in both reduced and oxidized monomeric form. Oxidative conditions increase homodimerization.

It localises to the endoplasmic reticulum membrane. It is found in the mitochondrion membrane. Endoplasmic reticulum and mitochondria-associated protein that probably functions as a regulator of cellular redox state and thereby regulates protein post-translational modification, protein folding and mitochondrial activity. The sequence is that of Thioredoxin-related transmembrane protein 2 (tmx2) from Xenopus tropicalis (Western clawed frog).